Consider the following 278-residue polypeptide: TATA box-binding protein-associated factor RNA polymerase I subunit D (278 aa).

Disordered stretches follow at residues 20–71 (ANRS…SSFE) and 88–116 (KKRY…RNPI). A compositionally biased stretch (polar residues) spans 22 to 33 (RSDNSSDSSLFK). Ser23 is modified (phosphoserine). Basic residues predominate over residues 88–99 (KKRYKKKKKRRY). Phosphoserine is present on residues Ser138 and Ser234.

As to quaternary structure, component of the transcription factor SL1/TIF-IB complex, composed of TBP and at least TAF1A, TAF1B, TAF1C and TAF1D. Interacts with UBTF.

Its subcellular location is the nucleus. Functionally, component of the transcription factor SL1/TIF-IB complex, which is involved in the assembly of the PIC (preinitiation complex) during RNA polymerase I-dependent transcription. The rate of PIC formation probably is primarily dependent on the rate of association of SL1/TIF-IB with the rDNA promoter. SL1/TIF-IB is involved in stabilization of nucleolar transcription factor 1/UBTF on rDNA. Formation of SL1/TIF-IB excludes the association of TBP with TFIID subunits. The chain is TATA box-binding protein-associated factor RNA polymerase I subunit D (TAF1D) from Homo sapiens (Human).